We begin with the raw amino-acid sequence, 357 residues long: Golgi to ER traffic protein 2 (357 aa).

Residues 1–224 (MSETTDKQLT…AKYHTYQEQL (224 aa)) are Cytoplasmic-facing. Positions 65 to 81 (TDTATVTDSSTNATSVS) are enriched in low complexity. The disordered stretch occupies residues 65 to 99 (TDTATVTDSSTNATSVSPSAAKATPTSTGVSSAIS). Over residues 88-98 (TPTSTGVSSAI) the composition is skewed to polar residues. The helical transmembrane segment at 225–245 (WQFRFLVVRILATIFNFAYHF) threads the bilayer. Topologically, residues 246 to 270 (ITIPSFTASNHAYVRDLSEVYPLLG) are lumenal. Residues 271–290 (FMTIFTSIEVVIIATYYLLF) form a helical membrane-spanning segment. At 291–334 (TKLGLFHASNQKSFILKGISTLSMFVPQLLRYEPLVATFLGYKE) the chain is on the cytoplasmic side. The chain crosses the membrane as a helical span at residues 335–355 (LLGIFVGDLSLVVVMFGLLSF). Topologically, residues 356–357 (SN) are lumenal.

The protein belongs to the GET2 family. As to quaternary structure, component of the Golgi to ER traffic (GET) complex, which is composed of GET1, GET2 and GET3. Within the complex, GET1 and GET2 form a heterotetramer which is stabilized by phosphatidylinositol binding and which binds to the GET3 homodimer.

The protein resides in the endoplasmic reticulum membrane. The protein localises to the golgi apparatus membrane. Its function is as follows. Required for the post-translational delivery of tail-anchored (TA) proteins to the endoplasmic reticulum. Together with GET1, acts as a membrane receptor for soluble GET3, which recognizes and selectively binds the transmembrane domain of TA proteins in the cytosol. The GET complex cooperates with the HDEL receptor ERD2 to mediate the ATP-dependent retrieval of resident ER proteins that contain a C-terminal H-D-E-L retention signal from the Golgi to the ER. The polypeptide is Golgi to ER traffic protein 2 (Lodderomyces elongisporus (strain ATCC 11503 / CBS 2605 / JCM 1781 / NBRC 1676 / NRRL YB-4239) (Yeast)).